Consider the following 346-residue polypeptide: Ribosomal RNA small subunit methyltransferase H (346 aa).

S-adenosyl-L-methionine-binding positions include 46-48 (GGY), Asp-63, Phe-90, Asp-113, and Gln-120. The disordered stretch occupies residues 270 to 346 (GGSAGSRHMP…LPETNELARS (77 aa)).

Belongs to the methyltransferase superfamily. RsmH family.

It localises to the cytoplasm. The catalysed reaction is cytidine(1402) in 16S rRNA + S-adenosyl-L-methionine = N(4)-methylcytidine(1402) in 16S rRNA + S-adenosyl-L-homocysteine + H(+). Specifically methylates the N4 position of cytidine in position 1402 (C1402) of 16S rRNA. This chain is Ribosomal RNA small subunit methyltransferase H, found in Brucella abortus (strain S19).